A 172-amino-acid chain; its full sequence is S-ribosylhomocysteine lyase (172 aa).

Residues His54, His58, and Cys128 each contribute to the Fe cation site.

The protein belongs to the LuxS family. Homodimer. Requires Fe cation as cofactor.

It carries out the reaction S-(5-deoxy-D-ribos-5-yl)-L-homocysteine = (S)-4,5-dihydroxypentane-2,3-dione + L-homocysteine. Its function is as follows. Involved in the synthesis of autoinducer 2 (AI-2) which is secreted by bacteria and is used to communicate both the cell density and the metabolic potential of the environment. The regulation of gene expression in response to changes in cell density is called quorum sensing. Catalyzes the transformation of S-ribosylhomocysteine (RHC) to homocysteine (HC) and 4,5-dihydroxy-2,3-pentadione (DPD). The protein is S-ribosylhomocysteine lyase of Vibrio vulnificus (strain CMCP6).